Reading from the N-terminus, the 185-residue chain is Ribosome-recycling factor (185 aa).

Belongs to the RRF family.

The protein localises to the cytoplasm. Functionally, responsible for the release of ribosomes from messenger RNA at the termination of protein biosynthesis. May increase the efficiency of translation by recycling ribosomes from one round of translation to another. Its function is as follows. Plays a role in sporulation. The polypeptide is Ribosome-recycling factor (Bacillus subtilis (strain 168)).